Reading from the N-terminus, the 404-residue chain is Probable tRNA sulfurtransferase (404 aa).

The region spanning 60–165 (RSVIEALKPV…DEAAYLSHED (106 aa)) is the THUMP domain. ATP contacts are provided by residues 183-184 (ML), 208-209 (HF), arginine 265, glycine 287, and glutamine 296.

This sequence belongs to the ThiI family.

It is found in the cytoplasm. The catalysed reaction is [ThiI sulfur-carrier protein]-S-sulfanyl-L-cysteine + a uridine in tRNA + 2 reduced [2Fe-2S]-[ferredoxin] + ATP + H(+) = [ThiI sulfur-carrier protein]-L-cysteine + a 4-thiouridine in tRNA + 2 oxidized [2Fe-2S]-[ferredoxin] + AMP + diphosphate. It carries out the reaction [ThiS sulfur-carrier protein]-C-terminal Gly-Gly-AMP + S-sulfanyl-L-cysteinyl-[cysteine desulfurase] + AH2 = [ThiS sulfur-carrier protein]-C-terminal-Gly-aminoethanethioate + L-cysteinyl-[cysteine desulfurase] + A + AMP + 2 H(+). The protein operates within cofactor biosynthesis; thiamine diphosphate biosynthesis. Catalyzes the ATP-dependent transfer of a sulfur to tRNA to produce 4-thiouridine in position 8 of tRNAs, which functions as a near-UV photosensor. Also catalyzes the transfer of sulfur to the sulfur carrier protein ThiS, forming ThiS-thiocarboxylate. This is a step in the synthesis of thiazole, in the thiamine biosynthesis pathway. The sulfur is donated as persulfide by IscS. This is Probable tRNA sulfurtransferase from Streptococcus equi subsp. equi (strain 4047).